Consider the following 31-residue polypeptide: Photosystem I reaction center subunit XII (31 aa).

Residues 7–26 traverse the membrane as a helical segment; it reads QIFIALLTALIPAFFALKLG.

Belongs to the PsaM family.

The protein resides in the plastid. It is found in the chloroplast thylakoid membrane. This is Photosystem I reaction center subunit XII from Euglena granulata.